The chain runs to 704 residues: MANSKMAFLAFLAVSFLCGLVSATYKVGVGRADITGPPVEINFMGYANIKQVGRGIHTRVFARAFVVEDEKGNRVAFVSADAGMMGYGLKREVIKRLQARYGNIYHNDNVAISGTHTHGAPGGFLMHLLYDISILGFVPQTFEVMAQGLYLCIKRATDNLVDGRILLSKTTVLNVNINRSPSSYLRNPAEERAQYEHDTDKTLTQLRFVDLENNLLGAFNWYAVHATSMNNTNRLVTSDNVGYAALLLEKEYNPNKMPGKGKFVGAFCSSNLGDVSPNIMGPKCSISGNECDLLTSRCPTGEGDCFASGPGKDMFESTQILGQRLADAALGLLNEQSQESTAREVTGDVRFIHQFVDMPNYNGSTYNPLSRKVDKIRGCQPAMGYSFAAGTTDGPGAFSFEQGTTTDNPMWNFVRDFIAAPTQEDIKCHEPKPILLATGRATFPYEWQPKIVSDQLLKIGDVIIAAVPCEFTTMAGRRLRNQIRAAASAVGGIDTEVIIAGLTNIYTSYTVTPEEYQAQRYEAASTIFGPHTHSIYMDVFERLTKAMMRNETVDAGPSPPYMNDVMLSLNTGVLFDGHPINTDFGYVKSQPNKEYGINETVKVTYISGNPRNNLFTEKTYFTIERKINEDRWKVAYTDASWETKMVWHRTNTILGFSEMDIYWDISPQTLPGEYRIRHSGEYKYILGGKYPYEGLTHSFTVKED.

Positions 1–23 (MANSKMAFLAFLAVSFLCGLVSA) are cleaved as a signal peptide. Asparagine 230 carries N-linked (GlcNAc...) asparagine glycosylation. The Nucleophile role is filled by serine 276. N-linked (GlcNAc...) asparagine glycans are attached at residues asparagine 362, asparagine 550, and asparagine 598.

This sequence belongs to the neutral ceramidase family. Post-translationally, N-glycosylated. In terms of tissue distribution, widely expressed in different tissues but enriched in neurons at all stages of development.

It localises to the secreted. The enzyme catalyses an N-acylsphing-4-enine + H2O = sphing-4-enine + a fatty acid. Functionally, hydrolyzes the sphingolipid ceramide into sphingosine and free fatty acid at an optimal pH of 6.5-7.5. Acts as a key regulator of sphingolipid signaling metabolites by generating sphingosine at the cell surface. Regulates synaptic vesicle exocytosis and trafficking by controlling presynaptic terminal sphingolipid composition. The protein is Neutral ceramidase (CDase) of Drosophila melanogaster (Fruit fly).